The primary structure comprises 95 residues: Co-chaperonin GroES (95 aa).

The protein belongs to the GroES chaperonin family. Heptamer of 7 subunits arranged in a ring. Interacts with the chaperonin GroEL.

The protein resides in the cytoplasm. Functionally, together with the chaperonin GroEL, plays an essential role in assisting protein folding. The GroEL-GroES system forms a nano-cage that allows encapsulation of the non-native substrate proteins and provides a physical environment optimized to promote and accelerate protein folding. GroES binds to the apical surface of the GroEL ring, thereby capping the opening of the GroEL channel. The protein is Co-chaperonin GroES of Bordetella bronchiseptica (strain ATCC BAA-588 / NCTC 13252 / RB50) (Alcaligenes bronchisepticus).